Reading from the N-terminus, the 308-residue chain is Porphobilinogen deaminase (308 aa).

Cys243 is subject to S-(dipyrrolylmethanemethyl)cysteine.

Belongs to the HMBS family. Monomer. The cofactor is dipyrromethane.

It carries out the reaction 4 porphobilinogen + H2O = hydroxymethylbilane + 4 NH4(+). The protein operates within porphyrin-containing compound metabolism; protoporphyrin-IX biosynthesis; coproporphyrinogen-III from 5-aminolevulinate: step 2/4. Its function is as follows. Tetrapolymerization of the monopyrrole PBG into the hydroxymethylbilane pre-uroporphyrinogen in several discrete steps. The polypeptide is Porphobilinogen deaminase (Mesorhizobium japonicum (strain LMG 29417 / CECT 9101 / MAFF 303099) (Mesorhizobium loti (strain MAFF 303099))).